Consider the following 898-residue polypeptide: Protein argonaute 1 (898 aa).

Residues 1–52 (MLALNAGSQYPGRGRGRGRGDGGNRVHKHDGINRYHGGFRGGRGGGGGGFRD) form a disordered region. A compositionally biased stretch (basic and acidic residues) spans 18–33 (GRGDGGNRVHKHDGIN). Gly residues predominate over residues 38 to 50 (GFRGGRGGGGGGF). One can recognise a PAZ domain in the interval 283 to 378 (KCSDEMRRLR…IFADRTKMSR (96 aa)). Residues 542–883 (FAMVKLRTKE…YARKYGSLKS (342 aa)) form the Piwi domain.

The protein belongs to the argonaute family.

The protein resides in the cytoplasm. Involved in RNA-mediated gene silencing (RNAi) of mobile elements and repeats including retroposons SLACS (Spliced Leader Associated Conserved Sequence), TATE (Telomere-Associated Transposable Element) and TAS-like sequences (Telomere Associated Sequence), and a family of 74-nucleotide long tandem repeats, CIR74. Predominantly binds to siRNAs derived from SLACS and TATE transposable elements and to a lesser extent to siRNAs from TAS-like and CIR74 elements. This Leishmania braziliensis protein is Protein argonaute 1.